The sequence spans 326 residues: Peroxidase 1 (326 aa).

The N-terminal stretch at 1–22 (MASSRVILALLLAAAAVMASSA) is a signal peptide. A Pyrrolidone carboxylic acid modification is found at Gln23. 4 cysteine pairs are disulfide-bonded: Cys33-Cys112, Cys66-Cys71, Cys118-Cys322, and Cys196-Cys231. His64 functions as the Proton acceptor in the catalytic mechanism. Ca(2+)-binding residues include Asp65, Val68, Gly70, Asp72, and Ser74. 2 N-linked (GlcNAc...) asparagine glycosylation sites follow: Asn82 and Asn153. Pro159 is a binding site for substrate. An N-linked (GlcNAc...) asparagine glycan is attached at Asn164. His189 lines the heme b pocket. Residue Thr190 participates in Ca(2+) binding. N-linked (GlcNAc...) asparagine glycosylation is found at Asn205 and Asn237. Asp244, Ser247, and Asp252 together coordinate Ca(2+).

Belongs to the peroxidase family. Classical plant (class III) peroxidase subfamily. Requires Ca(2+) as cofactor. Heme b is required as a cofactor.

It is found in the secreted. It catalyses the reaction 2 a phenolic donor + H2O2 = 2 a phenolic radical donor + 2 H2O. In terms of biological role, removal of H(2)O(2), oxidation of toxic reductants, biosynthesis and degradation of lignin, suberization, auxin catabolism, response to environmental stresses such as wounding, pathogen attack and oxidative stress. These functions might be dependent on each isozyme/isoform in each plant tissue. In Oryza sativa subsp. japonica (Rice), this protein is Peroxidase 1 (PRX74).